The primary structure comprises 477 residues: MGFWGLEVKPGKPQAYNPKNEQGKIHVTQATLGTGLSKEKSVIQCSIGDKAPIALCSLLPNKIECCPLNLEFDDDDEPVEFTVTGDRSIHLSGFLEYYQDDEDDYEHDEDDSDGIDVGESEEDDSCEYDSEEDEQLDEFEDFLDSNLERYRNAAAPKSGVIIEEIEDEEKPAKDNKAKQTKKKSQASEGENAKKQIVAIEGAHVPVLESEDEDEDGLPIPKGKSSEVENASGEKMVVDNDEQGSNKKRKAKAAEQDDGQESANKSKKKKNQKEKKKGENVLNEEAGQVQTGNVLKKQDISQISSNTKAQDGTANNAMSESSKTPDKSAEKKTKNKKKKKPSDEAAEISGTVEKQTPADSKSSQVRTYPNGLIVEELSMGKPNGKRADPGKTVSVRYIGKLQKNGKIFDSNIGKSPFKFRLGIGSVIKGWDVGVNGMRVGDKRKLTIPPSMGYGVKGAGGQIPPNSWLTFDVELINVQ.

Disordered stretches follow at residues 104–135 (DYEHDEDDSDGIDVGESEEDDSCEYDSEEDEQ) and 153–366 (AAAP…QVRT). Positions 264–274 (KSKKKKNQKEK) are enriched in basic residues. The segment covering 299-321 (ISQISSNTKAQDGTANNAMSESS) has biased composition (polar residues). Residues 322-331 (KTPDKSAEKK) are compositionally biased toward basic and acidic residues. Residues 351–366 (VEKQTPADSKSSQVRT) are compositionally biased toward polar residues. The PPIase FKBP-type domain occupies 389-477 (GKTVSVRYIG…TFDVELINVQ (89 aa)).

The protein belongs to the FKBP-type PPIase family. As to quaternary structure, interacts with histone H3. In terms of tissue distribution, broadly expressed in leaves, flowers, stems and roots. Detected in root apical meristem region and pollen.

The protein localises to the nucleus. The enzyme catalyses [protein]-peptidylproline (omega=180) = [protein]-peptidylproline (omega=0). Its function is as follows. PPIases accelerate the folding of proteins. It catalyzes the cis-trans isomerization of proline imidic peptide bonds in oligopeptides. Histone chaperone possibly involved in H3/H4 deposition to the nucleosome. Associates with 18S rDNA chromatin and negatively regulates the level of its expression. The sequence is that of Peptidyl-prolyl cis-trans isomerase FKBP53 (FKBP53) from Arabidopsis thaliana (Mouse-ear cress).